Consider the following 152-residue polypeptide: Cytosolic calcium-binding protein 1 (152 aa).

A run of 7 repeats spans residues 57-62 (VEETEK), 67-71 (TEEAQ), 78-82 (VEIKK), 104-108 (VEAKK), 112-116 (VEEKK), 124-129 (VEEEKK), and 131-136 (EAEEEK). The 7 X 5 AA approximate repeats of V-E-E-K-K stretch occupies residues 57–136 (VEETEKPIEE…EKKPEAEEEK (80 aa)). Residues 60-152 (TEKPIEETEE…VTAPVEKADE (93 aa)) are disordered. Basic and acidic residues predominate over residues 96–138 (DESKTEEVVEAKKEEEVEEKKTEEAPVVVEEEKKPEAEEEKPA).

As to expression, predominantly expressed in petioles (at protein level). Mainly observed in shoots, flowers, siliques and roots, and, to a lower extent, in stems and leaves.

It is found in the cytoplasm. The protein localises to the cytosol. Functionally, binds calcium Ca(2+) and may act as a signal mediator to buffer Ca(2+). In Arabidopsis thaliana (Mouse-ear cress), this protein is Cytosolic calcium-binding protein 1.